Consider the following 166-residue polypeptide: NADH-quinone oxidoreductase subunit E (166 aa).

Positions 92, 97, 133, and 137 each coordinate [2Fe-2S] cluster.

Belongs to the complex I 24 kDa subunit family. In terms of assembly, composed of 13 different subunits. Subunits NuoCD, E, F, and G constitute the peripheral sector of the complex. The cofactor is [2Fe-2S] cluster.

It catalyses the reaction a quinone + NADH + 5 H(+)(in) = a quinol + NAD(+) + 4 H(+)(out). Functionally, NDH-1 shuttles electrons from NADH, via FMN and iron-sulfur (Fe-S) centers, to quinones in the respiratory chain. The immediate electron acceptor for the enzyme in this species is believed to be ubiquinone. Couples the redox reaction to proton translocation (for every two electrons transferred, four hydrogen ions are translocated across the cytoplasmic membrane), and thus conserves the redox energy in a proton gradient. The chain is NADH-quinone oxidoreductase subunit E (nuoE) from Pseudomonas aeruginosa (strain ATCC 15692 / DSM 22644 / CIP 104116 / JCM 14847 / LMG 12228 / 1C / PRS 101 / PAO1).